A 284-amino-acid chain; its full sequence is Diaminopimelate epimerase (284 aa).

Substrate-binding residues include asparagine 14 and asparagine 67. Cysteine 76 functions as the Proton donor in the catalytic mechanism. Residues 77-78, asparagine 166, asparagine 199, and 217-218 contribute to the substrate site; these read GN and ER. Residue cysteine 226 is the Proton acceptor of the active site. Residue 227–228 coordinates substrate; it reads GT.

It belongs to the diaminopimelate epimerase family. Homodimer.

Its subcellular location is the cytoplasm. It catalyses the reaction (2S,6S)-2,6-diaminopimelate = meso-2,6-diaminopimelate. The protein operates within amino-acid biosynthesis; L-lysine biosynthesis via DAP pathway; DL-2,6-diaminopimelate from LL-2,6-diaminopimelate: step 1/1. Catalyzes the stereoinversion of LL-2,6-diaminopimelate (L,L-DAP) to meso-diaminopimelate (meso-DAP), a precursor of L-lysine and an essential component of the bacterial peptidoglycan. This chain is Diaminopimelate epimerase, found in Bacillus subtilis (strain 168).